A 406-amino-acid chain; its full sequence is 3-oxoacyl-[acyl-carrier-protein] synthase 1 (406 aa).

In terms of domain architecture, Ketosynthase family 3 (KS3) spans 1 to 403 (MKRAVITGLG…GTNATLVMRK (403 aa)). Catalysis depends on for beta-ketoacyl synthase activity residues Cys-163, His-298, and His-333.

It belongs to the thiolase-like superfamily. Beta-ketoacyl-ACP synthases family. Homodimer.

The protein resides in the cytoplasm. The enzyme catalyses a fatty acyl-[ACP] + malonyl-[ACP] + H(+) = a 3-oxoacyl-[ACP] + holo-[ACP] + CO2. The catalysed reaction is (3Z)-decenoyl-[ACP] + malonyl-[ACP] + H(+) = 3-oxo-(5Z)-dodecenoyl-[ACP] + holo-[ACP] + CO2. The protein operates within lipid metabolism; fatty acid biosynthesis. Involved in the type II fatty acid elongation cycle. Catalyzes the elongation of a wide range of acyl-ACP by the addition of two carbons from malonyl-ACP to an acyl acceptor. Can also use unsaturated fatty acids. Catalyzes a key reaction in unsaturated fatty acid (UFA) synthesis, the elongation of the cis-3-decenoyl-ACP produced by FabA. The sequence is that of 3-oxoacyl-[acyl-carrier-protein] synthase 1 (fabB) from Escherichia coli O6:H1 (strain CFT073 / ATCC 700928 / UPEC).